The chain runs to 440 residues: Argininosuccinate lyase (440 aa).

It belongs to the lyase 1 family. Argininosuccinate lyase subfamily.

The protein localises to the cytoplasm. It catalyses the reaction 2-(N(omega)-L-arginino)succinate = fumarate + L-arginine. Its pathway is amino-acid biosynthesis; L-arginine biosynthesis; L-arginine from L-ornithine and carbamoyl phosphate: step 3/3. The sequence is that of Argininosuccinate lyase from Clostridium botulinum (strain Kyoto / Type A2).